We begin with the raw amino-acid sequence, 667 residues long: DNA ligase (667 aa).

NAD(+) contacts are provided by residues 32–36 (DSVYD), 81–82 (SL), and glutamate 111. The active-site N6-AMP-lysine intermediate is the lysine 113. NAD(+)-binding residues include arginine 134, glutamate 168, lysine 285, and lysine 309. Residues cysteine 403, cysteine 406, cysteine 421, and cysteine 426 each contribute to the Zn(2+) site. Residues 588-667 (VGDNPFAGKT…DNLIEQLNLI (80 aa)) form the BRCT domain.

Belongs to the NAD-dependent DNA ligase family. LigA subfamily. Requires Mg(2+) as cofactor. Mn(2+) serves as cofactor.

The catalysed reaction is NAD(+) + (deoxyribonucleotide)n-3'-hydroxyl + 5'-phospho-(deoxyribonucleotide)m = (deoxyribonucleotide)n+m + AMP + beta-nicotinamide D-nucleotide.. DNA ligase that catalyzes the formation of phosphodiester linkages between 5'-phosphoryl and 3'-hydroxyl groups in double-stranded DNA using NAD as a coenzyme and as the energy source for the reaction. It is essential for DNA replication and repair of damaged DNA. The protein is DNA ligase of Lysinibacillus sphaericus (strain C3-41).